Here is a 448-residue protein sequence, read N- to C-terminus: UDP-N-acetylmuramoylalanine--D-glutamate ligase (448 aa).

An ATP-binding site is contributed by 116 to 122; it reads GSNAKST.

It belongs to the MurCDEF family.

It is found in the cytoplasm. The catalysed reaction is UDP-N-acetyl-alpha-D-muramoyl-L-alanine + D-glutamate + ATP = UDP-N-acetyl-alpha-D-muramoyl-L-alanyl-D-glutamate + ADP + phosphate + H(+). The protein operates within cell wall biogenesis; peptidoglycan biosynthesis. Cell wall formation. Catalyzes the addition of glutamate to the nucleotide precursor UDP-N-acetylmuramoyl-L-alanine (UMA). This Pseudomonas syringae pv. syringae (strain B728a) protein is UDP-N-acetylmuramoylalanine--D-glutamate ligase.